The chain runs to 314 residues: Diisopropyl-fluorophosphatase (314 aa).

Ca(2+) contacts are provided by glutamate 21, asparagine 120, asparagine 175, aspartate 229, aspartate 232, leucine 273, and histidine 274. The active-site Proton acceptor is histidine 287.

In terms of assembly, monomer. Requires Ca(2+) as cofactor.

The enzyme catalyses diisopropyl fluorophosphate + H2O = diisopropyl phosphate + fluoride + 2 H(+). With respect to regulation, inhibited by chelating agents. In terms of biological role, biological function and substrate unknown. However, it is capable of acting on phosphorus anhydride bonds (such as phosphorus-halide and phosphorus-cyanide) in organophosphorus compounds (including nerve gases). This Loligo vulgaris (Common European squid) protein is Diisopropyl-fluorophosphatase.